Reading from the N-terminus, the 536-residue chain is Phosphoenolpyruvate carboxykinase (ATP) (536 aa).

The substrate site is built by Arg61, Tyr195, and Lys201. Residues Lys201, His220, and 236-244 contribute to the ATP site; that span reads GLSGTGKTT. Positions 201 and 220 each coordinate Mn(2+). Residue Asp257 coordinates Mn(2+). Glu285, Arg322, and Thr447 together coordinate ATP. Arg322 contacts substrate.

The protein belongs to the phosphoenolpyruvate carboxykinase (ATP) family. Requires Mn(2+) as cofactor.

It is found in the cytoplasm. The catalysed reaction is oxaloacetate + ATP = phosphoenolpyruvate + ADP + CO2. It participates in carbohydrate biosynthesis; gluconeogenesis. Functionally, involved in the gluconeogenesis. Catalyzes the conversion of oxaloacetate (OAA) to phosphoenolpyruvate (PEP) through direct phosphoryl transfer between the nucleoside triphosphate and OAA. In Rhizobium meliloti (strain 1021) (Ensifer meliloti), this protein is Phosphoenolpyruvate carboxykinase (ATP).